We begin with the raw amino-acid sequence, 131 residues long: Global transcriptional regulator Spx 2 (131 aa).

An intrachain disulfide couples Cys-10 to Cys-13.

The protein belongs to the ArsC family. Spx subfamily. In terms of assembly, interacts with the C-terminal domain of the alpha subunit of the RNAP.

It is found in the cytoplasm. Functionally, global transcriptional regulator that plays a key role in stress response and exerts either positive or negative regulation of genes. Acts by interacting with the C-terminal domain of the alpha subunit of the RNA polymerase (RNAP). This interaction can enhance binding of RNAP to the promoter region of target genes and stimulate their transcription, or block interaction of RNAP with activator. The polypeptide is Global transcriptional regulator Spx 2 (Bacillus cereus (strain ATCC 14579 / DSM 31 / CCUG 7414 / JCM 2152 / NBRC 15305 / NCIMB 9373 / NCTC 2599 / NRRL B-3711)).